We begin with the raw amino-acid sequence, 129 residues long: Small ribosomal subunit protein uS11 (129 aa).

It belongs to the universal ribosomal protein uS11 family. In terms of assembly, part of the 30S ribosomal subunit. Interacts with proteins S7 and S18. Binds to IF-3.

In terms of biological role, located on the platform of the 30S subunit, it bridges several disparate RNA helices of the 16S rRNA. Forms part of the Shine-Dalgarno cleft in the 70S ribosome. The sequence is that of Small ribosomal subunit protein uS11 from Haemophilus influenzae (strain 86-028NP).